The chain runs to 1534 residues: Dicer-like protein 1 (1534 aa).

The disordered stretch occupies residues 36–70 (PSAEPGVEHDQISPGESDEEIEENISDQNNSSSQK). Residues 51-60 (ESDEEIEENI) show a composition bias toward acidic residues. The 182-residue stretch at 130 to 311 (LFERAKAQNT…AAATRLETLL (182 aa)) folds into the Helicase ATP-binding domain. 143-150 (LDTGSGKT) lines the ATP pocket. A DEAH box motif is present at residues 256–259 (DEAH). One can recognise a Helicase C-terminal domain in the interval 456-613 (ELSKHFSHAP…FCETLPEDRI (158 aa)). In terms of domain architecture, Dicer dsRNA-binding fold spans 648-738 (AIAILARYAS…KSIYHKRLPA (91 aa)). Residues 888 to 1016 (KTVTFVQEND…ICAEPLKISA (129 aa)) form the PAZ domain. 2 consecutive RNase III domains span residues 1054–1199 (SDYA…LSGG) and 1250–1402 (ALQV…VDSD). Mg(2+) contacts are provided by E1291, D1388, and E1391. A DRBM domain is found at 1436–1504 (TFLHNRLANE…SERALVVLDG (69 aa)). Zn(2+) is bound by residues C1448, H1475, C1516, and C1518.

Belongs to the helicase family. Dicer subfamily. It depends on Mg(2+) as a cofactor. Mn(2+) serves as cofactor.

Functionally, dicer-like endonuclease involved in cleaving double-stranded RNA in the RNA interference (RNAi) pathway. Produces 21 to 25 bp dsRNAs (siRNAs) which target the selective destruction of homologous RNAs leading to sequence-specific suppression of gene expression, called post-transcriptional gene silencing (PTGS). Part of a broad host defense response against viral infection and transposons. This Aspergillus clavatus (strain ATCC 1007 / CBS 513.65 / DSM 816 / NCTC 3887 / NRRL 1 / QM 1276 / 107) protein is Dicer-like protein 1 (dcl1).